Consider the following 63-residue polypeptide: MARVCEICGKGKQNGHSVSHSNIKTKRSFNANLQNVKIEVNGSVKKALVCTKCIKGNKISKAK.

This sequence belongs to the bacterial ribosomal protein bL28 family.

The sequence is that of Large ribosomal subunit protein bL28 from Brachyspira hyodysenteriae (strain ATCC 49526 / WA1).